A 242-amino-acid chain; its full sequence is Uridylate kinase (242 aa).

Residue 17–20 participates in ATP binding; sequence KLGG. UMP is bound at residue G58. Residues G59 and R63 each coordinate ATP. UMP contacts are provided by residues D78 and 139–146; that span reads MGMPYFST. Positions 172 and 175 each coordinate ATP.

The protein belongs to the UMP kinase family. Homohexamer.

It is found in the cytoplasm. The enzyme catalyses UMP + ATP = UDP + ADP. Its pathway is pyrimidine metabolism; CTP biosynthesis via de novo pathway; UDP from UMP (UMPK route): step 1/1. With respect to regulation, inhibited by UTP. Catalyzes the reversible phosphorylation of UMP to UDP. This Rhodococcus jostii (strain RHA1) protein is Uridylate kinase.